The sequence spans 63 residues: Beta-defensin 6 (63 aa).

Positions methionine 1–serine 22 are cleaved as a signal peptide. Pyrrolidone carboxylic acid is present on glutamine 23. Cystine bridges form between cysteine 31-cysteine 59, cysteine 38-cysteine 52, and cysteine 42-cysteine 60.

It belongs to the beta-defensin family. Predominantly expressed in skeletal muscle, also expressed in esophagus, tongue, and trachea. Also expressed in lung when induced by lipopolysaccharide.

Its subcellular location is the secreted. Functionally, has potent antibacterial activity against E.coli (ATCC 25922). The sequence is that of Beta-defensin 6 (Defb6) from Mus musculus (Mouse).